The chain runs to 467 residues: Argininosuccinate lyase (467 aa).

This sequence belongs to the lyase 1 family. Argininosuccinate lyase subfamily.

Its subcellular location is the cytoplasm. It carries out the reaction 2-(N(omega)-L-arginino)succinate = fumarate + L-arginine. It participates in amino-acid biosynthesis; L-arginine biosynthesis; L-arginine from L-ornithine and carbamoyl phosphate: step 3/3. The polypeptide is Argininosuccinate lyase (Thioalkalivibrio sulfidiphilus (strain HL-EbGR7)).